A 469-amino-acid chain; its full sequence is Trigger factor (469 aa).

Residues 165 to 250 (GDRVTIDYIG…VKAVCKSDEL (86 aa)) enclose the PPIase FKBP-type domain. Basic and acidic residues predominate over residues 444 to 460 (DLTEKKPLKKKTAEKVS). A disordered region spans residues 444 to 469 (DLTEKKPLKKKTAEKVSTKKKAPKKS).

This sequence belongs to the FKBP-type PPIase family. Tig subfamily.

Its subcellular location is the cytoplasm. It catalyses the reaction [protein]-peptidylproline (omega=180) = [protein]-peptidylproline (omega=0). Its function is as follows. Involved in protein export. Acts as a chaperone by maintaining the newly synthesized protein in an open conformation. Functions as a peptidyl-prolyl cis-trans isomerase. The protein is Trigger factor of Bartonella henselae (strain ATCC 49882 / DSM 28221 / CCUG 30454 / Houston 1) (Rochalimaea henselae).